The primary structure comprises 82 residues: UPF0337 protein PP_2059 (82 aa).

Belongs to the UPF0337 (CsbD) family.

The sequence is that of UPF0337 protein PP_2059 from Pseudomonas putida (strain ATCC 47054 / DSM 6125 / CFBP 8728 / NCIMB 11950 / KT2440).